The following is a 129-amino-acid chain: L-ectoine synthase (129 aa).

It belongs to the ectoine synthase family.

It catalyses the reaction (2S)-4-acetamido-2-aminobutanoate = L-ectoine + H2O. The protein operates within amine and polyamine biosynthesis; ectoine biosynthesis; L-ectoine from L-aspartate 4-semialdehyde: step 3/3. Catalyzes the circularization of gamma-N-acetyl-alpha,gamma-diaminobutyric acid (ADABA) to ectoine (1,4,5,6-tetrahydro-2-methyl-4-pyrimidine carboxylic acid), which is an excellent osmoprotectant. The chain is L-ectoine synthase from Mycobacterium sp. (strain KMS).